The following is a 430-amino-acid chain: Probable sulfoacetate transporter SauU (430 aa).

Transmembrane regions (helical) follow at residues 47-67 (LGLVFSAFAYPYAAMQILGGW), 83-103 (LIWGVATVLTGFAGSVLILVV), 142-162 (FARLGGAITPPVVLVIVAAAG), 165-185 (EAFIVLGAVSLGWTLLYAFFF), 228-248 (WLVTFVDFCYGWSLWVYLTWL), 263-283 (LALFTALPLMAGVVGDTLGGV), 301-321 (AVLFVGLAGSLMFIAPMTFTA), 327-347 (VILLSLSFFFLELTNAVLWSL), 362-382 (MMNTGFGVAGMVSPVVFGYLI), and 390-410 (LPFMISGALLGVGALASLFIN).

It belongs to the major facilitator superfamily.

The protein localises to the cell membrane. Functionally, may transport sulfoacetate into the cell. This is Probable sulfoacetate transporter SauU (sauU) from Cupriavidus necator (strain ATCC 17699 / DSM 428 / KCTC 22496 / NCIMB 10442 / H16 / Stanier 337) (Ralstonia eutropha).